A 335-amino-acid polypeptide reads, in one-letter code: Glyceraldehyde-3-phosphate dehydrogenase, cytosolic (335 aa).

NAD(+) is bound by residues 13–14 (RI), Asp35, and Arg80. D-glyceraldehyde 3-phosphate contacts are provided by residues 151-153 (SCT), Thr182, 211-212 (TG), and Arg234. The Nucleophile role is filled by Cys152. Asn316 provides a ligand contact to NAD(+).

The protein belongs to the glyceraldehyde-3-phosphate dehydrogenase family. Homotetramer.

Its subcellular location is the cytoplasm. The enzyme catalyses D-glyceraldehyde 3-phosphate + phosphate + NAD(+) = (2R)-3-phospho-glyceroyl phosphate + NADH + H(+). It functions in the pathway carbohydrate degradation; glycolysis; pyruvate from D-glyceraldehyde 3-phosphate: step 1/5. This Gracilaria gracilis (Red alga) protein is Glyceraldehyde-3-phosphate dehydrogenase, cytosolic (GAPC).